The sequence spans 357 residues: MSQSGKNGLTYSDAGVDIDAGNLLVQKIKPAVRSTRRPGADGEIGGFGGLFDLKAAGFADPVLVAANDGVGTKLKIAIDADYHDTVGIDLVAMCVNDLVVQGAEPLFFLDYFATGKLDPDQGAAIVGGIAAGCRQAGCALIGGETAEMPGMYSSGDYDLAGFAVGAAERGKLLPSGDIAEGDVILGLASSGVHSNGFSLVRKIVELSGLGWDAPAPFAEGRKLGEALLEPTRIYVKPLLKAIRETGALKALAHITGGGFPENIPRVLPKHLAAEIDLAAVKVPPVFSWLARTGGVEAKEMLRTFNCGIGMIVVVAEENVAAVSQALEAEGEKVVTLGRMIARAEGAAGTVYKGTLAI.

This sequence belongs to the AIR synthase family.

The protein localises to the cytoplasm. It carries out the reaction 2-formamido-N(1)-(5-O-phospho-beta-D-ribosyl)acetamidine + ATP = 5-amino-1-(5-phospho-beta-D-ribosyl)imidazole + ADP + phosphate + H(+). It participates in purine metabolism; IMP biosynthesis via de novo pathway; 5-amino-1-(5-phospho-D-ribosyl)imidazole from N(2)-formyl-N(1)-(5-phospho-D-ribosyl)glycinamide: step 2/2. The chain is Phosphoribosylformylglycinamidine cyclo-ligase from Rhizobium etli (strain CIAT 652).